The sequence spans 61 residues: Short neurotoxin 1 (61 aa).

Positions 1–16 (LECHNQQSSQPPTTKS) are enriched in polar residues. Positions 1 to 20 (LECHNQQSSQPPTTKSCPGD) are disordered. Intrachain disulfides connect cysteine 3–cysteine 23, cysteine 17–cysteine 40, cysteine 42–cysteine 53, and cysteine 54–cysteine 59.

Belongs to the three-finger toxin family. Short-chain subfamily. Type I alpha-neurotoxin sub-subfamily. As to expression, expressed by the venom gland.

The protein resides in the secreted. Its function is as follows. Binds to muscle nicotinic acetylcholine receptor (nAChR) and inhibit acetylcholine from binding to the receptor, thereby impairing neuromuscular transmission. The chain is Short neurotoxin 1 from Hemachatus haemachatus (Rinkhals).